A 232-amino-acid polypeptide reads, in one-letter code: Aspartate/glutamate leucyltransferase (232 aa).

The protein belongs to the R-transferase family. Bpt subfamily.

Its subcellular location is the cytoplasm. The catalysed reaction is N-terminal L-glutamyl-[protein] + L-leucyl-tRNA(Leu) = N-terminal L-leucyl-L-glutamyl-[protein] + tRNA(Leu) + H(+). The enzyme catalyses N-terminal L-aspartyl-[protein] + L-leucyl-tRNA(Leu) = N-terminal L-leucyl-L-aspartyl-[protein] + tRNA(Leu) + H(+). In terms of biological role, functions in the N-end rule pathway of protein degradation where it conjugates Leu from its aminoacyl-tRNA to the N-termini of proteins containing an N-terminal aspartate or glutamate. This Vibrio vulnificus (strain CMCP6) protein is Aspartate/glutamate leucyltransferase.